We begin with the raw amino-acid sequence, 293 residues long: MNDYLIKAINASKDLRLLTINGKDLVAEAQKRHDTWSASSAVLGRSLLGTLLLAGAELKGDQELTLRLLGDGPVGAAVVTAKSDLTVKGYVQNNHVALPAREDGHIDVKKAVGKGWLQVTKDLGLKQPYTGEVPIVSGEIAEDLTYYLAKSEQIPSAVGLSVFVNPNDTIGAAGGFLLQALPGASEELLQETEDRIKALPQLSSAFLDGMTPEDLAKKILGDDSKILEKDEVSYHCDCSKEKYAGMLETLKGSQLKEMIDEDHGAELVCNFCGNKYNFTEAELQAILDKKLGK.

Cystine bridges form between Cys236–Cys238 and Cys269–Cys272.

This sequence belongs to the HSP33 family. In terms of processing, under oxidizing conditions two disulfide bonds are formed involving the reactive cysteines. Under reducing conditions zinc is bound to the reactive cysteines and the protein is inactive.

It localises to the cytoplasm. Functionally, redox regulated molecular chaperone. Protects both thermally unfolding and oxidatively damaged proteins from irreversible aggregation. Plays an important role in the bacterial defense system toward oxidative stress. This is 33 kDa chaperonin from Lactobacillus delbrueckii subsp. bulgaricus (strain ATCC BAA-365 / Lb-18).